The sequence spans 105 residues: MTRDRPTLLARVLILPIRGYQRWISPLFPPVCRFYPSCSSYAVEALRVHGAGRGLWLTIRRLGKCHPFHPGGLDPVPPRRNESGTEISDARPGSDGEASPGAPGL.

Residues 68 to 105 are disordered; that stretch reads FHPGGLDPVPPRRNESGTEISDARPGSDGEASPGAPGL. Positions 77 to 94 are enriched in basic and acidic residues; the sequence is PPRRNESGTEISDARPGS.

The protein belongs to the UPF0161 family.

Its subcellular location is the cell membrane. Functionally, could be involved in insertion of integral membrane proteins into the membrane. The polypeptide is Putative membrane protein insertion efficiency factor (Thermobifida fusca (strain YX)).